The following is a 202-amino-acid chain: Dephospho-CoA kinase (202 aa).

A DPCK domain is found at 6–202 (KISVTGDPSS…QCFKALKGTI (197 aa)). An ATP-binding site is contributed by 14–19 (SSGKTE).

The protein belongs to the CoaE family.

It is found in the cytoplasm. It carries out the reaction 3'-dephospho-CoA + ATP = ADP + CoA + H(+). Its pathway is cofactor biosynthesis; coenzyme A biosynthesis; CoA from (R)-pantothenate: step 5/5. Catalyzes the phosphorylation of the 3'-hydroxyl group of dephosphocoenzyme A to form coenzyme A. In Chlamydia trachomatis serovar D (strain ATCC VR-885 / DSM 19411 / UW-3/Cx), this protein is Dephospho-CoA kinase.